A 195-amino-acid chain; its full sequence is Pyridoxal 5'-phosphate synthase subunit PdxT (195 aa).

55–57 lines the L-glutamine pocket; it reads GES. Cys-84 functions as the Nucleophile in the catalytic mechanism. Residues Arg-111 and 139–140 each bind L-glutamine; that span reads IR. Active-site charge relay system residues include His-175 and Glu-177.

The protein belongs to the glutaminase PdxT/SNO family. In terms of assembly, in the presence of PdxS, forms a dodecamer of heterodimers. Only shows activity in the heterodimer.

The catalysed reaction is aldehydo-D-ribose 5-phosphate + D-glyceraldehyde 3-phosphate + L-glutamine = pyridoxal 5'-phosphate + L-glutamate + phosphate + 3 H2O + H(+). It catalyses the reaction L-glutamine + H2O = L-glutamate + NH4(+). The protein operates within cofactor biosynthesis; pyridoxal 5'-phosphate biosynthesis. In terms of biological role, catalyzes the hydrolysis of glutamine to glutamate and ammonia as part of the biosynthesis of pyridoxal 5'-phosphate. The resulting ammonia molecule is channeled to the active site of PdxS. The chain is Pyridoxal 5'-phosphate synthase subunit PdxT from Methanosphaerula palustris (strain ATCC BAA-1556 / DSM 19958 / E1-9c).